The sequence spans 89 residues: Large ribosomal subunit protein bL27 (89 aa).

A disordered region spans residues 1 to 23; that stretch reads MAHKKAGGSSRNGRDSESKRLGV.

The protein belongs to the bacterial ribosomal protein bL27 family.

The sequence is that of Large ribosomal subunit protein bL27 from Rhizobium meliloti (strain 1021) (Ensifer meliloti).